Reading from the N-terminus, the 514-residue chain is CENP-B homolog protein 1 (514 aa).

In terms of domain architecture, HTH CENPB-type spans 69–144 (DIKKIRAPKF…RRRHYIQQSA (76 aa)).

The protein localises to the nucleus. The protein resides in the chromosome. Its subcellular location is the centromere. In terms of biological role, binds to centromeric K-type repeat DNA and ARS3002 DNA. The CBH-binding consensus sequence is Py-Pu-A-T-A-T-Py-Pu-T-A. This Schizosaccharomyces pombe (strain 972 / ATCC 24843) (Fission yeast) protein is CENP-B homolog protein 1 (cbh1).